Consider the following 538-residue polypeptide: Beta-1,4-mannosyl-glycoprotein 4-beta-N-acetylglucosaminyltransferase (538 aa).

The Cytoplasmic portion of the chain corresponds to 1 to 7; that stretch reads MKMRRYK. The chain crosses the membrane as a helical; Signal-anchor for type II membrane protein span at residues 8–23; it reads LFLMFCMAGLCLISFL. At 24–538 the chain is on the lumenal side; the sequence is HFFKTLSYVT…VRGKLDTAEG (515 aa). Positions 120–161 are disordered; sequence PGTRMLEKPSPGRTEEKTEVSEGSSARGPARRPMRHVLSSRE. Residues Asn245, Asn263, and Asn401 are each glycosylated (N-linked (GlcNAc...) asparagine). The interval 507-538 is disordered; the sequence is REPKSTVEGGRQNQGSDGRSSAVRGKLDTAEG.

This sequence belongs to the glycosyltransferase 17 family. Interacts with MGAT4D. In terms of tissue distribution, highly expressed in brain and kidney and to a much lesser extent in stomach, heart, intestine, uterus, testis, ovary and lung. Not present in spleen, liver and muscle. In brain, expressed in neurons of hippocampus.

Its subcellular location is the golgi apparatus membrane. The enzyme catalyses N(4)-{beta-D-GlcNAc-(1-&gt;2)-alpha-D-Man-(1-&gt;3)-[beta-D-GlcNAc-(1-&gt;2)-alpha-D-Man-(1-&gt;6)]-beta-D-Man-(1-&gt;4)-beta-D-GlcNAc-(1-&gt;4)-beta-D-GlcNAc}-L-asparaginyl-[protein] + UDP-N-acetyl-alpha-D-glucosamine = N(4)-{beta-D-GlcNAc-(1-&gt;2)-alpha-D-Man-(1-&gt;3)-[beta-D-GlcNAc-(1-&gt;4)]-[beta-D-GlcNAc-(1-&gt;2)-alpha-D-Man-(1-&gt;6)]-beta-D-Man-(1-&gt;4)-beta-D-GlcNAc-(1-&gt;4)-beta-D-GlcNAc}-L-asparaginyl-[protein] + UDP + H(+). It functions in the pathway protein modification; protein glycosylation. Functionally, it is involved in the regulation of the biosynthesis and biological function of glycoprotein oligosaccharides. Catalyzes the addition of N-acetylglucosamine in beta 1-4 linkage to the beta-linked mannose of the trimannosyl core of N-linked sugar chains, called bisecting N-acetylglucosamine (GlcNAc). It is one of the most important enzymes involved in the regulation of the biosynthesis of glycoprotein oligosaccharides. The addition of this bisecting GlcNAc residue alters not only the composition, but also the conformation of the N-glycan. The introduction of the bisecting GlcNAc residue results in the suppression of further processing and elongation of N-glycans, precluding the formation of beta-1,6 GlcNAc branching, catalyzed by MGAT5 since it is unable to use the bisected oligosaccharide as a substrate. Addition of bisecting N-acetylglucosamine to CDH1/E-cadherin modulates CDH1 cell membrane location. Inhibits NeuAc-alpha-2,3-Gal-beta-1,4-GlcNAc- formation which modulates sialylation levels and plays a role in cell migration regulation. In brain, addition of bisecting N-acetylglucosamine to BACE1 blocks its lysosomal targeting in response to oxidative stress and further degradation which increases its location to early endosome and the APP cleavage. The protein is Beta-1,4-mannosyl-glycoprotein 4-beta-N-acetylglucosaminyltransferase of Mus musculus (Mouse).